Reading from the N-terminus, the 917-residue chain is Protein FAN (917 aa).

Residues arginine 176–arginine 247 enclose the GRAM domain. Residues asparagine 189 to alanine 286 form the BEACH-type PH domain. The region spanning glutamate 290–arginine 575 is the BEACH domain. 6 WD repeats span residues isoleucine 628–serine 658, phenylalanine 670–serine 700, glycine 712–serine 740, glutamate 761–aspartate 791, cysteine 803–aspartate 833, and glycine 884–lysine 914.

In terms of tissue distribution, ubiquitous.

Its function is as follows. Couples the p55 TNF-receptor (TNF-R55 / TNFR1) to neutral sphingomyelinase (N-SMASE). Specifically binds to the N-smase activation domain of TNF-R55. May regulate ceramide production by N-SMASE. This chain is Protein FAN (NSMAF), found in Homo sapiens (Human).